The sequence spans 222 residues: UPF0758 protein Ppha_0935 (222 aa).

The MPN domain occupies 100-222; that stretch reads KIQAARDVFE…CFSFRESGLL (123 aa). Residues histidine 171, histidine 173, and aspartate 184 each coordinate Zn(2+). The short motif at 171 to 184 is the JAMM motif element; that stretch reads HNHPSGDVEPSNAD.

Belongs to the UPF0758 family.

The polypeptide is UPF0758 protein Ppha_0935 (Pelodictyon phaeoclathratiforme (strain DSM 5477 / BU-1)).